The primary structure comprises 1147 residues: Lon protease homolog 2, peroxisomal (1147 aa).

The region spanning 20-348 (LPTYKLDSNL…EVNRMLESMI (329 aa)) is the Lon N-terminal domain. Disordered regions lie at residues 395–444 (KPDK…DDDD) and 561–626 (KIES…SLTT). The segment covering 427-444 (DGNESNDEYDDDEDDDDD) has biased composition (acidic residues). 2 stretches are compositionally biased toward basic and acidic residues: residues 561 to 574 (KIES…KKNE) and 582 to 597 (KNDK…RSDD). ATP is bound at residue 651 to 658 (GPPGTGKT). A Lon proteolytic domain is found at 903–1131 (SAKCGVVNGL…WDVIKAVWGD (229 aa)). Residues serine 1006 and lysine 1049 contribute to the active site.

Belongs to the peptidase S16 family.

The protein resides in the peroxisome matrix. It carries out the reaction Hydrolysis of proteins in presence of ATP.. ATP-dependent serine protease that mediates the selective degradation of misfolded and unassembled polypeptides in the peroxisomal matrix. Necessary for type 2 peroxisome targeting signal (PTS2)-containing protein processing and facilitates peroxisome matrix protein import. The protein is Lon protease homolog 2, peroxisomal of Debaryomyces hansenii (strain ATCC 36239 / CBS 767 / BCRC 21394 / JCM 1990 / NBRC 0083 / IGC 2968) (Yeast).